A 564-amino-acid polypeptide reads, in one-letter code: Urease subunit alpha (564 aa).

One can recognise a Urease domain in the interval Gly-126–Phe-564. 3 residues coordinate Ni(2+): His-131, His-133, and Lys-214. The residue at position 214 (Lys-214) is an N6-carboxylysine. His-216 serves as a coordination point for substrate. 2 residues coordinate Ni(2+): His-243 and His-269. His-317 acts as the Proton donor in catalysis. Ni(2+) is bound at residue Asp-357.

The protein belongs to the metallo-dependent hydrolases superfamily. Urease alpha subunit family. Heterotrimer of UreA (gamma), UreB (beta) and UreC (alpha) subunits. Three heterotrimers associate to form the active enzyme. Ni cation is required as a cofactor. Post-translationally, carboxylation allows a single lysine to coordinate two nickel ions.

It is found in the cytoplasm. It catalyses the reaction urea + 2 H2O + H(+) = hydrogencarbonate + 2 NH4(+). The protein operates within nitrogen metabolism; urea degradation; CO(2) and NH(3) from urea (urease route): step 1/1. This Burkholderia pseudomallei (strain 1710b) protein is Urease subunit alpha.